The primary structure comprises 145 residues: Large ribosomal subunit protein bL19 (145 aa).

This sequence belongs to the bacterial ribosomal protein bL19 family.

Its function is as follows. This protein is located at the 30S-50S ribosomal subunit interface and may play a role in the structure and function of the aminoacyl-tRNA binding site. The chain is Large ribosomal subunit protein bL19 from Brachyspira hyodysenteriae (strain ATCC 49526 / WA1).